The following is a 40-amino-acid chain: Protamine-1 (40 aa).

The interval 1–40 (MPPRRKRVSSAPRRRRRTYRRTTAHKHQDRPVHRRRRRRH) is disordered.

Testis.

Its subcellular location is the nucleus. The protein resides in the chromosome. Functionally, protamines substitute for histones in the chromatin of sperm during the haploid phase of spermatogenesis. They compact sperm DNA into a highly condensed, stable and inactive complex. The polypeptide is Protamine-1 (PBP1) (Bufo japonicus (Japanese common toad)).